Reading from the N-terminus, the 279-residue chain is Virginiamycin B lyase (279 aa).

Histidine 215 is a binding site for substrate. Glutamate 253 contributes to the Mg(2+) binding site. The active-site Proton acceptor is the histidine 255. Glutamate 270 is a binding site for Mg(2+).

This sequence belongs to the Vgb family. Monomer. Mg(2+) serves as cofactor.

In terms of biological role, inactivates the type B streptogramin antibiotics by linearizing the lactone ring at the ester linkage, generating a free phenylglycine carboxylate and converting the threonyl moiety into 2-amino-butenoic acid. In Nocardia farcinica (strain IFM 10152), this protein is Virginiamycin B lyase.